Reading from the N-terminus, the 512-residue chain is Retinaldehyde dehydrogenase 3 (512 aa).

Residues 1-23 (MATANGAVENGQPDGKPPALPRP) are disordered. Alanine 2 is subject to N-acetylalanine. Residues lysine 204, glutamate 207, and 257 to 262 (GSTEVG) each bind NAD(+). Glutamate 280 functions as the Proton acceptor in the catalytic mechanism. Residue cysteine 314 is the Nucleophile of the active site. Residues glutamine 361 and glutamate 411 each coordinate NAD(+).

This sequence belongs to the aldehyde dehydrogenase family. Homotetramer.

Its subcellular location is the cytoplasm. It carries out the reaction all-trans-retinal + NAD(+) + H2O = all-trans-retinoate + NADH + 2 H(+). The enzyme catalyses retinal + NAD(+) + H2O = retinoate + NADH + 2 H(+). The catalysed reaction is all-trans-13,14-dihydroretinal + NAD(+) + H2O = all-trans-13,14-dihydroretinoate + NADH + 2 H(+). The protein operates within cofactor metabolism; retinol metabolism. Catalyzes the NAD-dependent oxidation of aldehyde substrates, such as all-trans-retinal and all-trans-13,14-dihydroretinal, to their corresponding carboxylic acids, all-trans-retinoate and all-trans-13,14-dihydroretinoate, respectively. High specificity for all-trans-retinal as substrate, can also accept acetaldehyde as substrate in vitro but with lower affinity. Required for the biosynthesis of normal levels of retinoate in the embryonic ocular and nasal regions; a critical lipid in the embryonic development of the eye and the nasal region. This Rattus norvegicus (Rat) protein is Retinaldehyde dehydrogenase 3 (Aldh1a3).